The following is a 218-amino-acid chain: Adenylate kinase (218 aa).

ATP is bound at residue 10 to 15; sequence GAGKGT. The interval 30–59 is NMP; the sequence is STGDMLRAAVKAGTPLGQQAKAVMDAGKLV. AMP-binding positions include T31, R36, 57–59, 85–88, and Q92; these read KLV and GFPR. The segment at 122 to 159 is LID; that stretch reads GRRSHPASGRTYHVKFNPPKVEGKDDVTGEDLIQREDD. ATP contacts are provided by residues R123 and 132–133; that span reads TY. Residues 127 to 147 are disordered; sequence PASGRTYHVKFNPPKVEGKDD. Residues R156 and R167 each coordinate AMP. G203 is an ATP binding site.

The protein belongs to the adenylate kinase family. In terms of assembly, monomer.

It localises to the cytoplasm. It carries out the reaction AMP + ATP = 2 ADP. Its pathway is purine metabolism; AMP biosynthesis via salvage pathway; AMP from ADP: step 1/1. In terms of biological role, catalyzes the reversible transfer of the terminal phosphate group between ATP and AMP. Plays an important role in cellular energy homeostasis and in adenine nucleotide metabolism. The chain is Adenylate kinase from Paracidovorax citrulli (strain AAC00-1) (Acidovorax citrulli).